Consider the following 393-residue polypeptide: Sulfate adenylyltransferase (393 aa).

Belongs to the sulfate adenylyltransferase family.

The enzyme catalyses sulfate + ATP + H(+) = adenosine 5'-phosphosulfate + diphosphate. It functions in the pathway sulfur metabolism; hydrogen sulfide biosynthesis; sulfite from sulfate: step 1/3. This is Sulfate adenylyltransferase from Symbiobacterium thermophilum (strain DSM 24528 / JCM 14929 / IAM 14863 / T).